The following is a 391-amino-acid chain: NADH-quinone oxidoreductase subunit D (391 aa).

The protein belongs to the complex I 49 kDa subunit family. In terms of assembly, NDH-1 is composed of 14 different subunits. Subunits NuoB, C, D, E, F, and G constitute the peripheral sector of the complex.

It localises to the cell inner membrane. It carries out the reaction a quinone + NADH + 5 H(+)(in) = a quinol + NAD(+) + 4 H(+)(out). Functionally, NDH-1 shuttles electrons from NADH, via FMN and iron-sulfur (Fe-S) centers, to quinones in the respiratory chain. The immediate electron acceptor for the enzyme in this species is believed to be ubiquinone. Couples the redox reaction to proton translocation (for every two electrons transferred, four hydrogen ions are translocated across the cytoplasmic membrane), and thus conserves the redox energy in a proton gradient. In Rickettsia conorii (strain ATCC VR-613 / Malish 7), this protein is NADH-quinone oxidoreductase subunit D.